The chain runs to 3169 residues: FRAS1-related extracellular matrix protein 2 (3169 aa).

The segment at 1 to 24 (MHSAGTPGLSSRRTGNSTSFQPGP) is disordered. The signal sequence occupies residues 1 to 46 (MHSAGTPGLSSRRTGNSTSFQPGPPPPPRLLLLLLLLLSLVSRVPA). Over residues 8 to 21 (GLSSRRTGNSTSFQ) the composition is skewed to polar residues. The Extracellular segment spans residues 47–3113 (QPAAFGRALL…SPSSAVSLVT (3067 aa)). CSPG repeat units follow at residues 319–413 (KPSF…LELE), 438–537 (APVV…LRMV), 560–675 (PPVL…FRVQ), 700–807 (PPEL…FQVE), 828–919 (QPPE…LEVS), 945–1037 (HPTG…LSLS), 1066–1168 (APEI…FRCS), 1189–1282 (EQPE…IKLT), 1303–1399 (TPRM…FDVT), 1420–1512 (VFPD…FQVT), 1532–1621 (KKPV…FTVT), and 1655–1752 (VPQI…FAVE). Asn-358 carries an N-linked (GlcNAc...) asparagine glycan. N-linked (GlcNAc...) asparagine glycosylation is found at Asn-1244 and Asn-1369. Asn-1584 and Asn-1741 each carry an N-linked (GlcNAc...) asparagine glycan. Calx-beta domains follow at residues 1759 to 1858 (LTYQ…VVLS), 1871 to 1982 (ATVE…VLLS), 1997 to 2103 (QVTI…LVLR), 2118 to 2220 (VSIN…LVLG), and 2238 to 2342 (TLIR…VHLK). The disordered stretch occupies residues 3036–3057 (SLVSQGKPQSTTKSRKKREIRS). Residues 3037–3047 (LVSQGKPQSTT) are compositionally biased toward polar residues. The chain crosses the membrane as a helical span at residues 3114–3134 (VVGGTTVGLLTICLTVIAVLM). The Cytoplasmic portion of the chain corresponds to 3135 to 3169 (CRGKESFRGKDAPKGSSSSEPMVPPQSHHNDSSEV). The interval 3141 to 3169 (FRGKDAPKGSSSSEPMVPPQSHHNDSSEV) is disordered.

Belongs to the FRAS1 family. Interacts with FREM1.

It localises to the cell membrane. Functionally, extracellular matrix protein required for maintenance of the integrity of the skin epithelium and for maintenance of renal epithelia. Required for epidermal adhesion. Involved in the development of eyelids and the anterior segment of the eyeballs. The polypeptide is FRAS1-related extracellular matrix protein 2 (FREM2) (Homo sapiens (Human)).